Reading from the N-terminus, the 436-residue chain is ATP-dependent protease ATPase subunit HslU (436 aa).

ATP contacts are provided by residues Val-18, 60–65 (GVGKTE), Asp-249, Glu-314, and Arg-386.

The protein belongs to the ClpX chaperone family. HslU subfamily. As to quaternary structure, a double ring-shaped homohexamer of HslV is capped on each side by a ring-shaped HslU homohexamer. The assembly of the HslU/HslV complex is dependent on binding of ATP.

The protein resides in the cytoplasm. ATPase subunit of a proteasome-like degradation complex; this subunit has chaperone activity. The binding of ATP and its subsequent hydrolysis by HslU are essential for unfolding of protein substrates subsequently hydrolyzed by HslV. HslU recognizes the N-terminal part of its protein substrates and unfolds these before they are guided to HslV for hydrolysis. This is ATP-dependent protease ATPase subunit HslU from Rhizobium rhizogenes (strain K84 / ATCC BAA-868) (Agrobacterium radiobacter).